Here is a 203-residue protein sequence, read N- to C-terminus: MFNRFNKFQAAVALALLSRGALGDSYTNSTSSADLSSITSVSSASASATASDSLSSSDGTVYLPSTTISGDLTVTGKVIATEAVEVAAGGKLTLLDGEKYVFSSDLKVHGDLVVEKSEASYEGTAFDVSGETFEVSGNFSAEETGAVSASIYSFTPSSFKSSGDISLSLSKAKKGEVTFSPYSNAGTFSLSNAILNGGSVSGL.

Residues 1 to 23 (MFNRFNKFQAAVALALLSRGALG) form the signal peptide. Residues asparagine 28 and asparagine 138 are each glycosylated (N-linked (GlcNAc...) asparagine). Asparagine 184 carries GPI-anchor amidated asparagine lipidation. Residues 185–203 (AGTFSLSNAILNGGSVSGL) constitute a propeptide, removed in mature form.

The protein localises to the cell membrane. The chain is Putative GPI-anchored protein YHR214W from Saccharomyces cerevisiae (strain ATCC 204508 / S288c) (Baker's yeast).